Consider the following 153-residue polypeptide: Ribosomal RNA large subunit methyltransferase H (153 aa).

S-adenosyl-L-methionine contacts are provided by residues leucine 70, glycine 102, and 121–126; that span reads LSRMTF.

The protein belongs to the RNA methyltransferase RlmH family. As to quaternary structure, homodimer.

Its subcellular location is the cytoplasm. It carries out the reaction pseudouridine(1915) in 23S rRNA + S-adenosyl-L-methionine = N(3)-methylpseudouridine(1915) in 23S rRNA + S-adenosyl-L-homocysteine + H(+). In terms of biological role, specifically methylates the pseudouridine at position 1915 (m3Psi1915) in 23S rRNA. This is Ribosomal RNA large subunit methyltransferase H from Geobacter sulfurreducens (strain ATCC 51573 / DSM 12127 / PCA).